The sequence spans 573 residues: DEAD-box ATP-dependent RNA helicase 47B (573 aa).

The Q motif motif lies at 131-159 (KSFEELGLPPLLIDRLNKEGLSTPTEVQS). The region spanning 162–362 (IPIISQKHDA…RSWGHDPVLV (201 aa)) is the Helicase ATP-binding domain. Residue 175–182 (SYTGSGKT) participates in ATP binding. The DEAD box signature appears at 293–296 (DEVD). The Helicase C-terminal domain maps to 421–565 (TLRRCIHALE…PCEFTEGKLL (145 aa)).

Belongs to the DEAD box helicase family.

It catalyses the reaction ATP + H2O = ADP + phosphate + H(+). The protein is DEAD-box ATP-dependent RNA helicase 47B of Oryza sativa subsp. japonica (Rice).